A 339-amino-acid chain; its full sequence is Catalase-related peroxidase (339 aa).

An N-terminal signal peptide occupies residues 1 to 31; the sequence is MIRIRNRWFRWLAIALASLVASIGIATVGFA. His-58 is an active-site residue. Tyr-328 contributes to the heme binding site.

It belongs to the catalase family. It depends on heme as a cofactor.

The protein resides in the periplasm. Functionally, has an organic peroxide-dependent peroxidase activity. This Synechococcus elongatus (strain ATCC 33912 / PCC 7942 / FACHB-805) (Anacystis nidulans R2) protein is Catalase-related peroxidase (srpA).